The primary structure comprises 750 residues: Photosystem I P700 chlorophyll a apoprotein A1 (750 aa).

8 consecutive transmembrane segments (helical) span residues 70–93 (VFSAHFGQLSIIFLWLSGMYFHGA), 156–179 (LYCTAIGALIFAALMLFAGWFHYH), 195–219 (LNHHLAGLLGLGSLSWAGHQIHVSL), 291–309 (IAHHHLAIAILFLIAGHMY), 346–369 (WHAQLSLNLAMLGSTTIVVAHHMY), 385–411 (LSLFTHHMWIGGFLIVGAAAHAAIFMV), 433–455 (AIISHLNWVCIFLGFHSFGLYIH), and 531–549 (FLVHHIHAFTIHVTVLILL). Residues cysteine 573 and cysteine 582 each coordinate [4Fe-4S] cluster. A run of 2 helical transmembrane segments spans residues 589–610 (HVFLGLFWMYNAISVVIFHFSW) and 664–686 (LSAYGLFFLGAHFVWAFSLMFLF). Position 675 (histidine 675) interacts with chlorophyll a'. The chlorophyll a site is built by methionine 683 and tyrosine 691. Tryptophan 692 serves as a coordination point for phylloquinone. A helical transmembrane segment spans residues 724–744 (AVGVTHYLLGGIATTWAFFLA).

Belongs to the PsaA/PsaB family. As to quaternary structure, the PsaA/B heterodimer binds the P700 chlorophyll special pair and subsequent electron acceptors. PSI consists of a core antenna complex that captures photons, and an electron transfer chain that converts photonic excitation into a charge separation. The eukaryotic PSI reaction center is composed of at least 11 subunits. It depends on P700 is a chlorophyll a/chlorophyll a' dimer, A0 is one or more chlorophyll a, A1 is one or both phylloquinones and FX is a shared 4Fe-4S iron-sulfur center. as a cofactor.

The protein resides in the plastid. The protein localises to the chloroplast thylakoid membrane. The enzyme catalyses reduced [plastocyanin] + hnu + oxidized [2Fe-2S]-[ferredoxin] = oxidized [plastocyanin] + reduced [2Fe-2S]-[ferredoxin]. Functionally, psaA and PsaB bind P700, the primary electron donor of photosystem I (PSI), as well as the electron acceptors A0, A1 and FX. PSI is a plastocyanin-ferredoxin oxidoreductase, converting photonic excitation into a charge separation, which transfers an electron from the donor P700 chlorophyll pair to the spectroscopically characterized acceptors A0, A1, FX, FA and FB in turn. Oxidized P700 is reduced on the lumenal side of the thylakoid membrane by plastocyanin. The polypeptide is Photosystem I P700 chlorophyll a apoprotein A1 (Agrostis stolonifera (Creeping bentgrass)).